Consider the following 977-residue polypeptide: ELMO domain-containing protein A (977 aa).

One can recognise an ELMO domain in the interval Glu383 to Leu561. 2 stretches are compositionally biased toward low complexity: residues Ser792–Gly838 and Gln852–Ser897. Positions Ser792 to Pro899 are disordered.

In terms of assembly, associates with mhcA.

Functions as a negative regulator of actin polymerization. Modulates actin/myosin II at cortex actinomyosins to prevent excessive F-actin polymerization around the cell periphery, thereby maintaining proper cell shape during phagocytosis and chemotaxis. This Dictyostelium discoideum (Social amoeba) protein is ELMO domain-containing protein A (elmoA).